Here is a 608-residue protein sequence, read N- to C-terminus: Zinc finger protein 652 (608 aa).

Ser57 is subject to Phosphoserine. Positions 61–232 (VLADTKMSKP…KRATKEAKAP (172 aa)) are disordered. The segment covering 71-97 (HLHETEEQPYFREPRAVSDVHTVKEDR) has biased composition (basic and acidic residues). Acidic residues-rich tracts occupy residues 98–108 (ENSDDTEEEEE) and 151–162 (EEDEEETEEEAT). A Phosphoserine modification is found at Ser100. Thr103 is subject to Phosphothreonine. Over residues 194–208 (AASAAAATTSPAPRT) the composition is skewed to low complexity. A phosphoserine mark is found at Ser196 and Ser203. The C2H2-type 1 zinc finger occupies 244–267 (LTCEKCPRVFNTRWYLEKHMNVTH). Residues 271–293 (QICDKCGKKFVLESELSLHQQTD) form a C2H2-type 2; degenerate zinc finger. 6 consecutive C2H2-type zinc fingers follow at residues 298 to 321 (IQCV…KIVH), 328 to 350 (FACE…MVAH), 356 to 378 (FTCE…SLQH), 384 to 406 (FRCE…MSIH), 412 to 434 (FMCQ…MKTH), and 440 to 462 (FICE…RRTH). Residues 468-491 (YPCDVCGQRFRFSNMLKAHKEKCF) form a C2H2-type 9; degenerate zinc finger. Positions 497 to 608 (VNVPPAVQIP…KNSAAPAQHH (112 aa)) are mediates interaction with CBFA2T3.

Belongs to the krueppel C2H2-type zinc-finger protein family. As to quaternary structure, interacts with CBFA2T3.

It localises to the nucleus. Its function is as follows. Functions as a transcriptional repressor. This Mus musculus (Mouse) protein is Zinc finger protein 652 (Znf652).